The following is a 294-amino-acid chain: Cytidine deaminase (294 aa).

2 consecutive CMP/dCMP-type deaminase domains span residues 48 to 168 (DEDA…FGPK) and 186 to 294 (LTGN…VLLG). 89 to 91 (NME) is a substrate binding site. His-102 is a binding site for Zn(2+). Glu-104 functions as the Proton donor in the catalytic mechanism. 2 residues coordinate Zn(2+): Cys-129 and Cys-132.

Belongs to the cytidine and deoxycytidylate deaminase family. As to quaternary structure, homodimer. The cofactor is Zn(2+).

It carries out the reaction cytidine + H2O + H(+) = uridine + NH4(+). The catalysed reaction is 2'-deoxycytidine + H2O + H(+) = 2'-deoxyuridine + NH4(+). This enzyme scavenges exogenous and endogenous cytidine and 2'-deoxycytidine for UMP synthesis. The protein is Cytidine deaminase of Salmonella typhi.